Reading from the N-terminus, the 439-residue chain is CBL-interacting protein kinase 14 (439 aa).

In terms of domain architecture, Protein kinase spans 12 to 267 (YELGRLLGKG…IQKIKESTWF (256 aa)). ATP contacts are provided by residues 18 to 26 (LGKGTFGKV) and Lys-41. The Proton acceptor role is filled by Asp-135. The tract at residues 153–182 (DFGLSALSESKRQDGLLHTTCGTPAYVAPE) is activation loop. The NAF domain maps to 298–333 (RKKNAHEDVKPMSVTNLNAFEIISFSKGFDLSGMFI). Residues 338–367 (RNEARFTSDKSASTIISKLEDVAKALNLRV) are PPI.

Belongs to the protein kinase superfamily. CAMK Ser/Thr protein kinase family. SNF1 subfamily. It depends on Mn(2+) as a cofactor.

The enzyme catalyses L-seryl-[protein] + ATP = O-phospho-L-seryl-[protein] + ADP + H(+). It carries out the reaction L-threonyl-[protein] + ATP = O-phospho-L-threonyl-[protein] + ADP + H(+). In terms of biological role, CIPK serine-threonine protein kinases interact with CBL proteins. Binding of a CBL protein to the regulatory NAF domain of CIPK protein lead to the activation of the kinase in a calcium-dependent manner. This is CBL-interacting protein kinase 14 (CIPK14) from Oryza sativa subsp. japonica (Rice).